A 214-amino-acid polypeptide reads, in one-letter code: Variable small protein 24 (214 aa).

The first 18 residues, 1-18 (MRKRISAIIMTLFMVFMS), serve as a signal peptide directing secretion. Residue cysteine 19 is the site of N-palmitoyl cysteine attachment. Cysteine 19 carries the S-diacylglycerol cysteine lipid modification. The disordered stretch occupies residues 146-172 (TELGKKDASDDDTKKAIKKDNSDKTKG).

It belongs to the variable small protein (Vsp) family.

It is found in the cell outer membrane. The Vlp and Vsp proteins are antigenically distinct proteins, only one vlp or vsp gene is transcriptionally active at any one time. Switching between these genes is a mechanism of host immune response evasion. This is Variable small protein 24 from Borrelia hermsii.